A 135-amino-acid chain; its full sequence is Small ribosomal subunit protein uS9 (135 aa).

Residues 96-135 (SADNRKPLKTEGHLSRDPRAKERRKYGLKKARKAPQFSKR) are disordered. Over residues 97–115 (ADNRKPLKTEGHLSRDPRA) the composition is skewed to basic and acidic residues. Basic residues predominate over residues 116-135 (KERRKYGLKKARKAPQFSKR).

This sequence belongs to the universal ribosomal protein uS9 family.

This is Small ribosomal subunit protein uS9 from Prochlorococcus marinus (strain MIT 9303).